The sequence spans 181 residues: MERLHESLHEAPIIDKDGYEYLVHPISNGVPVLEPGLLREVVIDIMQQSDFNVDKIVAPEAMGIHLATALSLQTDVPLVVIRKRSYGLPGEVALHKSTGYSESEMYINDIEAGDRILIIDDLLSTGGTLAAICGALDDIGTEIIDIVVVIRKIGQSAMDELEHDVTSLVDITVEDGEVTIQ.

The protein belongs to the purine/pyrimidine phosphoribosyltransferase family. Archaeal HPRT subfamily.

Its function is as follows. May catalyze a purine salvage reaction, the substrate is unknown. The polypeptide is HGPRTase-like protein 2 (Haloquadratum walsbyi (strain DSM 16854 / JCM 12705 / C23)).